The sequence spans 178 residues: Large ribosomal subunit protein uL6 (178 aa).

This sequence belongs to the universal ribosomal protein uL6 family. In terms of assembly, part of the 50S ribosomal subunit.

This protein binds to the 23S rRNA, and is important in its secondary structure. It is located near the subunit interface in the base of the L7/L12 stalk, and near the tRNA binding site of the peptidyltransferase center. This Campylobacter concisus (strain 13826) protein is Large ribosomal subunit protein uL6.